An 82-amino-acid polypeptide reads, in one-letter code: Probable acyl carrier protein IacP (82 aa).

In terms of domain architecture, Carrier spans 3–78 (MDIEARVKKV…DICRVVKKSL (76 aa)). Residue serine 38 is modified to O-(pantetheine 4'-phosphoryl)serine.

4'-phosphopantetheine is transferred from CoA to a specific serine of apo-IacP.

The protein localises to the cytoplasm. In terms of biological role, acyl carrier protein. This is Probable acyl carrier protein IacP (iacP) from Salmonella typhimurium (strain SL1344).